The sequence spans 226 residues: Probable transcriptional regulator RABBIT EARS (226 aa).

The C2H2-type zinc finger occupies 55–77 (YSCSFCGREFKSAQALGGHMNVH). Positions 80–102 (DRARLKQQSLSPSSTDQATPPEC) are disordered. Positions 85 to 97 (KQQSLSPSSTDQA) are enriched in polar residues. The EAR-like (transcriptional repression) motif lies at 212–216 (LDLEL).

In terms of tissue distribution, strongly expressed in inflorescences and flowers, and weakly in siliques, seedlings and roots. In flowers, it is expressed in petal primordia and their precursor cells. Also expressed in the lateral root caps and the basal cells of lateral roots.

It is found in the nucleus. Probable transcriptional regulator essential for petal development. Required for the early development of the organ primordia of the second whorl. Acts downstream of AP1 and PTL. The chain is Probable transcriptional regulator RABBIT EARS (RBE) from Arabidopsis thaliana (Mouse-ear cress).